A 124-amino-acid chain; its full sequence is Glycine cleavage system H protein (124 aa).

Residues 22–104 form the Lipoyl-binding domain; it reads KAKVGITDFA…YENGYLFIIE (83 aa). Lys-63 is modified (N6-lipoyllysine).

This sequence belongs to the GcvH family. As to quaternary structure, the glycine cleavage system is composed of four proteins: P, T, L and H. Requires (R)-lipoate as cofactor.

The glycine cleavage system catalyzes the degradation of glycine. The H protein shuttles the methylamine group of glycine from the P protein to the T protein. The protein is Glycine cleavage system H protein of Endomicrobium trichonymphae.